We begin with the raw amino-acid sequence, 378 residues long: Spermidine/putrescine import ATP-binding protein PotA (378 aa).

An ABC transporter domain is found at 18-248 (VQLAGIRKCF…PKNLFVAGFI (231 aa)). 50 to 57 (GPSGCGKT) provides a ligand contact to ATP.

The protein belongs to the ABC transporter superfamily. Spermidine/putrescine importer (TC 3.A.1.11.1) family. In terms of assembly, the complex is composed of two ATP-binding proteins (PotA), two transmembrane proteins (PotB and PotC) and a solute-binding protein (PotD).

The protein localises to the cell inner membrane. It catalyses the reaction ATP + H2O + polyamine-[polyamine-binding protein]Side 1 = ADP + phosphate + polyamineSide 2 + [polyamine-binding protein]Side 1.. Part of the ABC transporter complex PotABCD involved in spermidine/putrescine import. Responsible for energy coupling to the transport system. This Escherichia coli O1:K1 / APEC protein is Spermidine/putrescine import ATP-binding protein PotA.